Here is a 289-residue protein sequence, read N- to C-terminus: CRISPR-associated endoribonuclease Cas6 2 (289 aa).

This sequence belongs to the CRISPR-associated endoribonuclease Cas6 family. In terms of assembly, possibly part of the aCascade ribonucleoprotein complex. It depends on Mg(2+) as a cofactor.

Its function is as follows. CRISPR (clustered regularly interspaced short palindromic repeat) is an adaptive immune system that provides protection against mobile genetic elements (viruses, transposable elements and conjugative plasmids). CRISPR clusters contain sequences complementary to antecedent mobile elements and target invading nucleic acids. CRISPR clusters are transcribed and processed into CRISPR RNA (crRNA). Functions as a ssRNA-specific endoribonuclease, generating an 8 base-long tag known as the 5' handle. The protein is CRISPR-associated endoribonuclease Cas6 2 (cas6b) of Saccharolobus solfataricus (strain ATCC 35092 / DSM 1617 / JCM 11322 / P2) (Sulfolobus solfataricus).